Reading from the N-terminus, the 181-residue chain is Adenylate kinase (181 aa).

10–15 (GAGKGT) is an ATP binding site. The segment at 30–59 (STGELFRKNIQDGTKLGVEAKRYLDAGDLV) is NMP. Residues Thr31, Arg36, 57 to 59 (DLV), 85 to 88 (GYPR), and Gln92 each bind AMP. The segment at 126-132 (GRGRADD) is LID. Arg127 contributes to the ATP binding site. AMP-binding residues include Arg129 and Arg140. Residue Gly166 participates in ATP binding.

Belongs to the adenylate kinase family. As to quaternary structure, monomer.

The protein resides in the cytoplasm. The enzyme catalyses AMP + ATP = 2 ADP. The protein operates within purine metabolism; AMP biosynthesis via salvage pathway; AMP from ADP: step 1/1. In terms of biological role, catalyzes the reversible transfer of the terminal phosphate group between ATP and AMP. Plays an important role in cellular energy homeostasis and in adenine nucleotide metabolism. The protein is Adenylate kinase of Mycobacterium ulcerans (strain Agy99).